We begin with the raw amino-acid sequence, 314 residues long: Vacuolar membrane protein FOSTERSO_4058 (314 aa).

Residues 32–59 are disordered; the sequence is KPTSSVVSETSSKSLPSLTSSAFSTSSG. A helical transmembrane segment spans residues 93-113; sequence VYIAVGAVIGAIFISILIWWL. Phosphoserine is present on residues S148, S254, and S274. The disordered stretch occupies residues 240 to 309; it reads EERKLNLNRP…PSMFLDDVLN (70 aa). The span at 254–269 shows a compositional bias: basic and acidic residues; sequence SPERKEKKINSMEGYH.

It belongs to the PRM5 family.

The protein resides in the vacuole membrane. The polypeptide is Vacuolar membrane protein FOSTERSO_4058 (Saccharomyces cerevisiae (strain FostersO) (Baker's yeast)).